Consider the following 284-residue polypeptide: uncharacterized protein (284 aa).

It to E.coli YnjA.

This is an uncharacterized protein from Mycobacterium tuberculosis (strain CDC 1551 / Oshkosh).